The primary structure comprises 435 residues: MSQKPHLNLIVIGHVDHGKSTLVGRLLMDRGFLDEKTIKEAEEAAKKLGKESEKYAFLLDRLKEERERGVTINLTFMRFETKKFFFTIIDAPGHRDFVKNMITGASQADAAILVVSAKKGEYEAGMSAEGQTREHIILAKTMGINQVIVAVNKMDLTDPPYDEKRFKEIVDQVGKFMKSFGFDMNKVKFVPVVAPTGENITQRSENMKWYTGPTLEEYLDQLEIPPKPVDKPLRIPIQEVYSISGVGVVPVGRVETGVLKVGDKVVFMPVGKVGEVRSIETHHTKIEKAEPGDNIGFNVRGVEKKDIKRGDVAGSLNVPPTVADEFTAQIIVIWHPTAVSVGYTPVVHIHTASVACRITELTSKIDPKTGKEVEKNPQFLKSGDSAIVKMKPIKELVVEKFREFPALGRFAMRDMGKTVGVGVVIDVKPKKVEIK.

The region spanning 4–229 (KPHLNLIVIG…DQLEIPPKPV (226 aa)) is the tr-type G domain. The tract at residues 13–20 (GHVDHGKS) is G1. Residue 13-20 (GHVDHGKS) participates in GTP binding. Residue serine 20 coordinates Mg(2+). Residues 69 to 73 (GVTIN) are G2. Residues 90 to 93 (DAPG) form a G3 region. GTP-binding positions include 90-94 (DAPGH) and 152-155 (NKMD). The interval 152-155 (NKMD) is G4. The segment at 193 to 195 (VAP) is G5.

The protein belongs to the TRAFAC class translation factor GTPase superfamily. Classic translation factor GTPase family. EF-Tu/EF-1A subfamily.

The protein resides in the cytoplasm. The enzyme catalyses GTP + H2O = GDP + phosphate + H(+). Functionally, GTP hydrolase that promotes the GTP-dependent binding of aminoacyl-tRNA to the A-site of ribosomes during protein biosynthesis. In Sulfurisphaera tokodaii (strain DSM 16993 / JCM 10545 / NBRC 100140 / 7) (Sulfolobus tokodaii), this protein is Elongation factor 1-alpha.